The primary structure comprises 296 residues: Small ribosomal subunit protein uS2 (296 aa).

The disordered stretch occupies residues 245-296 (WEAPAAGFAGATGTGWDGAAGDEWGAAPATTEWAASAAPAAASGEAAKETTW). The span at 263–289 (AAGDEWGAAPATTEWAASAAPAAASGE) shows a compositional bias: low complexity.

The protein belongs to the universal ribosomal protein uS2 family. As to quaternary structure, component of the small ribosomal subunit. Mature ribosomes consist of a small (40S) and a large (60S) subunit. The 40S subunit contains about 33 different proteins and 1 molecule of RNA (18S). The 60S subunit contains about 49 different proteins and 3 molecules of RNA (25S, 5.8S and 5S). Interacts with RPS21.

Its subcellular location is the cytoplasm. Its function is as follows. Required for the assembly and/or stability of the 40S ribosomal subunit. Required for the processing of the 20S rRNA-precursor to mature 18S rRNA in a late step of the maturation of 40S ribosomal subunits. This Fusarium vanettenii (strain ATCC MYA-4622 / CBS 123669 / FGSC 9596 / NRRL 45880 / 77-13-4) (Fusarium solani subsp. pisi) protein is Small ribosomal subunit protein uS2.